The sequence spans 325 residues: Cell wall mannoprotein PIR3 (325 aa).

Residues 1-18 form the signal peptide; it reads MQYKKPLVVSALAATSLA. The propeptide occupies 19 to 67; that stretch reads AYAPKDPWSTLTPSATYKGGITDYSSSFGIAIEAVATSASSVASSKAKR. PIR1/2/3 repeat units lie at residues 68-91, 92-109, 110-127, 128-145, 146-163, 164-181, 182-199, and 200-217; these read AASQ…KKST, AAAV…AKST, AAAA…TTST, KAAA…SKTT, and SGAS…AEVK.

The protein belongs to the PIR protein family. Covalently linked to beta-1,3-glucan of the inner cell wall layer via an alkali-sensitive ester linkage between the gamma-carboxyl group of glutamic acids, arising from specific glutamines within the PIR1/2/3 repeats, and hydroxyl groups of glucoses of beta-1,3-glucan chains. In terms of processing, O-glycosylated. Extensively O-mannosylated.

It is found in the secreted. Its subcellular location is the cell wall. Functionally, component of the outer cell wall layer. Required for stability of the cell wall and for optimal growth. Required for resistance against several antifungal and cell wall-perturbing agents. In Saccharomyces cerevisiae (strain ATCC 204508 / S288c) (Baker's yeast), this protein is Cell wall mannoprotein PIR3 (PIR3).